We begin with the raw amino-acid sequence, 263 residues long: Coiled-coil domain-containing protein 172 (263 aa).

Residues T13–E191 adopt a coiled-coil conformation.

The protein belongs to the CCDC172 family. As to quaternary structure, may interact with TEKT2. As to expression, detected in spermatozoa (at protein level). Predominantly expressed in testis and in spermatozoa from the caput and corpus epididymis.

Its subcellular location is the cytoplasm. The protein localises to the cell projection. It localises to the cilium. This chain is Coiled-coil domain-containing protein 172 (Ccdc172), found in Rattus norvegicus (Rat).